Reading from the N-terminus, the 204-residue chain is Colicin-A (204 aa).

Transmembrane regions (helical) follow at residues 139-161 (SWVL…LGAY) and 165-187 (LGVP…GALI).

This sequence belongs to the channel forming colicin family.

It localises to the cell membrane. Its function is as follows. This colicin is a channel-forming colicin. This class of transmembrane toxins depolarize the cytoplasmic membrane, leading to dissipation of cellular energy. Functionally, colicins are polypeptide toxins produced by and active against E.coli and closely related bacteria. In Escherichia coli, this protein is Colicin-A (caa).